The primary structure comprises 331 residues: Glutamyl-tRNA reductase (331 aa).

Substrate-binding positions include 49 to 52, Ser107, 112 to 114, and Gln118; these read TCNR and EDQ. Residue Cys50 is the Nucleophile of the active site. 184–189 is an NADP(+) binding site; sequence GNGEIG.

Belongs to the glutamyl-tRNA reductase family. As to quaternary structure, homodimer.

It catalyses the reaction (S)-4-amino-5-oxopentanoate + tRNA(Glu) + NADP(+) = L-glutamyl-tRNA(Glu) + NADPH + H(+). It participates in porphyrin-containing compound metabolism; protoporphyrin-IX biosynthesis; 5-aminolevulinate from L-glutamyl-tRNA(Glu): step 1/2. Functionally, catalyzes the NADPH-dependent reduction of glutamyl-tRNA(Glu) to glutamate 1-semialdehyde (GSA). This Acetivibrio thermocellus (strain ATCC 27405 / DSM 1237 / JCM 9322 / NBRC 103400 / NCIMB 10682 / NRRL B-4536 / VPI 7372) (Clostridium thermocellum) protein is Glutamyl-tRNA reductase.